Here is a 232-residue protein sequence, read N- to C-terminus: Large ribosomal subunit protein uL1 (232 aa).

The protein belongs to the universal ribosomal protein uL1 family. Part of the 50S ribosomal subunit.

Its function is as follows. Binds directly to 23S rRNA. The L1 stalk is quite mobile in the ribosome, and is involved in E site tRNA release. In terms of biological role, protein L1 is also a translational repressor protein, it controls the translation of the L11 operon by binding to its mRNA. This is Large ribosomal subunit protein uL1 from Alkaliphilus metalliredigens (strain QYMF).